A 971-amino-acid polypeptide reads, in one-letter code: Reversion-inducing cysteine-rich protein with Kazal motifs (971 aa).

A signal peptide spans 1–22 (MASVRASPRSALLLLLAAAGVA). The stretch at 37–84 (CCNHSKDNQMCRDVCEQIFSSKSESRLKHLLQRAPDYCPETMVEIWSC) is one Knot 1 repeat. Residues 37-338 (CCNHSKDNQM…NPVEVSMLTC (302 aa)) are 5 X Knot repeats. N-linked (GlcNAc...) asparagine glycosylation is found at asparagine 39 and asparagine 86. Knot repeat units lie at residues 104-141 (CCELAIGLECRQACKQASSKNDISKVCRKEYENALFSC) and 151-197 (CCSY…LIHC). Asparagine 200 is a glycosylation site (N-linked (GlcNAc...) asparagine). Knot repeat units lie at residues 216-263 (CCDR…LWQC) and 292-338 (CCSK…MLTC). N-linked (GlcNAc...) asparagine glycosylation is found at asparagine 297 and asparagine 352. Kazal-like domains lie at 627-673 (TFTG…PCIS), 698-752 (TFDK…PCQP), and 753-789 (FCRAKEPVCGHNGETYSSVCAAYSDRVAVDYYGPCQA). Disulfide bonds link cysteine 633-cysteine 658, cysteine 635-cysteine 654, cysteine 643-cysteine 671, cysteine 716-cysteine 735, cysteine 724-cysteine 750, and cysteine 761-cysteine 787. Positions 704 to 750 (CSQYECVPRQLTCDQARDPVCDTDHMEHSNLCTLYQRGKSLSYRGPC) constitute a Kazal-like 2; degenerate domain. The GPI-anchor amidated serine moiety is linked to residue serine 942. Positions 943-971 (SAVVGRPLFHSLLLLLSLGLTVHLLWTRP) are cleaved as a propeptide — removed in mature form.

The protein belongs to the RECK family. As to quaternary structure, interacts (via knot repeats) with WNT7A (via disordered linker region); the interaction is direct. Interacts (via knot repeats) with WNT7B (via disordered linker region); the interaction is direct. Interacts with ADGRA2; the interaction is direct. Interacts with MMP9.

It localises to the cell membrane. Functions together with ADGRA2 to enable brain endothelial cells to selectively respond to Wnt7 signals (WNT7A or WNT7B). Plays a key role in Wnt7-specific responses: required for central nervous system (CNS) angiogenesis and blood-brain barrier regulation. Acts as a Wnt7-specific coactivator of canonical Wnt signaling by decoding Wnt ligands: acts by interacting specifically with the disordered linker region of Wnt7, thereby conferring ligand selectivity for Wnt7. ADGRA2 is then required to deliver RECK-bound Wnt7 to frizzled by assembling a higher-order RECK-ADGRA2-Fzd-LRP5-LRP6 complex. Also acts as a serine protease inhibitor: negatively regulates matrix metalloproteinase-9 (MMP9) by suppressing MMP9 secretion and by direct inhibition of its enzymatic activity. Also inhibits metalloproteinase activity of MMP2 and MMP14 (MT1-MMP). The protein is Reversion-inducing cysteine-rich protein with Kazal motifs of Mus musculus (Mouse).